A 1368-amino-acid chain; its full sequence is DNA-directed RNA polymerase subunit beta (1368 aa).

It belongs to the RNA polymerase beta chain family. The RNAP catalytic core consists of 2 alpha, 1 beta, 1 beta' and 1 omega subunit. When a sigma factor is associated with the core the holoenzyme is formed, which can initiate transcription.

The catalysed reaction is RNA(n) + a ribonucleoside 5'-triphosphate = RNA(n+1) + diphosphate. Its function is as follows. DNA-dependent RNA polymerase catalyzes the transcription of DNA into RNA using the four ribonucleoside triphosphates as substrates. In Paraburkholderia phytofirmans (strain DSM 17436 / LMG 22146 / PsJN) (Burkholderia phytofirmans), this protein is DNA-directed RNA polymerase subunit beta.